A 332-amino-acid polypeptide reads, in one-letter code: MKVTFEELKGAFYRVLRSRNIAEDTADECAEMFARTTESGVYSHGVNRFPRFIQQLDNGDIIPDAKPQRVTSLGAIEQWDAKRAIGNLTAKKMMDRAIELASDHGIGLVALRNANHWMRGGSYGWQAAEKGYIGICWTNSIAVMPPWGAKECRIGTNPLIVAIPSTPITMVDMSMSMFSYGMLEVNRLAGRELPVDGGFDDNGQLTKEPGVIEKNRRILPMGYWKGSGLSIVLDMIATLLSNGSSVAEVTQENSDEYGVSQIFIAIEVDKLIDGATRDAKLQRIMDFITTAERADDNVAIRLPGHEFTKLLDDNRRHGITIDDSVWAKIQAL.

H44 serves as the catalytic Proton donor. NAD(+) is bound by residues 168–174 (ITMVDMS), 224–225 (WK), and 304–306 (GHE).

The protein belongs to the LDH2/MDH2 oxidoreductase family. DlgD subfamily. As to quaternary structure, homodimer.

Its subcellular location is the cytoplasm. The enzyme catalyses 3-dehydro-L-gulonate + NAD(+) = 2,3-dioxo-L-gulonate + NADH + H(+). It catalyses the reaction 3-dehydro-L-gulonate + NADP(+) = 2,3-dioxo-L-gulonate + NADPH + H(+). Catalyzes the reduction of 2,3-diketo-L-gulonate in the presence of NADH, to form 3-keto-L-gulonate. This Salmonella paratyphi B (strain ATCC BAA-1250 / SPB7) protein is 2,3-diketo-L-gulonate reductase.